The primary structure comprises 510 residues: DNA nucleotidylexotransferase (510 aa).

Residues 11–17 (PRRKQPK) carry the Nuclear localization signal motif. Positions 27–124 (KYDIKFKDIA…QPVEIERKHR (98 aa)) constitute a BRCT domain. Residues 254–258 (VGLRT) are involved in DNA binding. A 2'-deoxyribonucleoside 5'-triphosphate contacts are provided by residues 329-334 (GFRRGN) and 338-341 (HDVD). Residues Asp-339, Asp-341, and Asp-434 each contribute to the Mg(2+) site. Residue 449–450 (GW) participates in a 2'-deoxyribonucleoside 5'-triphosphate binding.

Belongs to the DNA polymerase type-X family. The cofactor is Mg(2+).

It is found in the nucleus. It catalyses the reaction DNA(n) + a 2'-deoxyribonucleoside 5'-triphosphate = DNA(n+1) + diphosphate. Template-independent DNA polymerase which catalyzes the random addition of deoxynucleoside 5'-triphosphate to the 3'-end of a DNA initiator. One of the in vivo functions of this enzyme is the addition of nucleotides at the junction (N region) of rearranged Ig heavy chain and T-cell receptor gene segments during the maturation of B- and T-cells. This Ambystoma mexicanum (Axolotl) protein is DNA nucleotidylexotransferase (DNTT).